The following is a 396-amino-acid chain: Enoyl-[acyl-carrier-protein] reductase [NADH] (396 aa).

NAD(+) is bound by residues 47-52 (GASTGF), 73-74 (FE), 110-111 (DA), and 138-139 (LA). A substrate-binding site is contributed by Y224. Y234 (proton donor) is an active-site residue. NAD(+)-binding positions include K243 and 272 to 274 (LVT).

The protein belongs to the TER reductase family. As to quaternary structure, monomer.

The enzyme catalyses a 2,3-saturated acyl-[ACP] + NAD(+) = a (2E)-enoyl-[ACP] + NADH + H(+). It participates in lipid metabolism; fatty acid biosynthesis. Functionally, involved in the final reduction of the elongation cycle of fatty acid synthesis (FAS II). Catalyzes the reduction of a carbon-carbon double bond in an enoyl moiety that is covalently linked to an acyl carrier protein (ACP). This is Enoyl-[acyl-carrier-protein] reductase [NADH] from Flavobacterium psychrophilum (strain ATCC 49511 / DSM 21280 / CIP 103535 / JIP02/86).